The chain runs to 209 residues: APC/C-CDH1 modulator 1 (209 aa).

A disordered region spans residues 1 to 38; it reads MISPSKKRTILSSKNINQKPRAVVKGNELRSPSKRRSQ. Ser-48 carries the post-translational modification Phosphoserine. The residue at position 161 (Thr-161) is a Phosphothreonine. At Ser-202 the chain carries Phosphoserine.

As to quaternary structure, interacts with CDH1, BMH1 and BMH2.

Functionally, negative regulator of GDH1, the activator protein that regulates the ubiquitin ligase activity and substrate specificity of the anaphase promoting complex/cyclosome (APC/C), and which is required for exit from mitosis, cytokinesis and formation of prereplicative complexes in G1. This is APC/C-CDH1 modulator 1 (ACM1) from Saccharomyces cerevisiae (strain ATCC 204508 / S288c) (Baker's yeast).